Reading from the N-terminus, the 87-residue chain is Tan_10cys (87 aa).

A signal peptide spans 1–21 (MNLKVLFLLAMVLVTLCLGED). A propeptide spanning residues 22–27 (RVTDRR) is cleaved from the precursor.

This sequence belongs to the teretoxin C (TC) superfamily. In terms of processing, contains 5 disulfide bonds. As to expression, expressed by the venom duct.

Its subcellular location is the secreted. In Terebra anilis (Auger snail), this protein is Tan_10cys.